Here is a 279-residue protein sequence, read N- to C-terminus: Small ribosomal subunit protein uS2 (279 aa).

Belongs to the universal ribosomal protein uS2 family. In terms of assembly, component of the small ribosomal subunit. Mature ribosomes consist of a small (40S) and a large (60S) subunit. The 40S subunit contains about 33 different proteins and 1 molecule of RNA (18S). The 60S subunit contains about 49 different proteins and 3 molecules of RNA (25S, 5.8S and 5S). Interacts with ribosomal protein S21.

The protein localises to the cytoplasm. Its function is as follows. Required for the assembly and/or stability of the 40S ribosomal subunit. Required for the processing of the 20S rRNA-precursor to mature 18S rRNA in a late step of the maturation of 40S ribosomal subunits. The polypeptide is Small ribosomal subunit protein uS2 (Chlamydomonas reinhardtii (Chlamydomonas smithii)).